Consider the following 535-residue polypeptide: Peptide chain release factor 3 (535 aa).

The tr-type G domain occupies 8–276; sequence ARRRTFAIIS…ALVEQAPPPG (269 aa). GTP is bound by residues 17–24, 85–89, and 139–142; these read SHPDAGKT, DTPGH, and NKMD.

This sequence belongs to the TRAFAC class translation factor GTPase superfamily. Classic translation factor GTPase family. PrfC subfamily.

It is found in the cytoplasm. Its function is as follows. Increases the formation of ribosomal termination complexes and stimulates activities of RF-1 and RF-2. It binds guanine nucleotides and has strong preference for UGA stop codons. It may interact directly with the ribosome. The stimulation of RF-1 and RF-2 is significantly reduced by GTP and GDP, but not by GMP. This Bordetella petrii (strain ATCC BAA-461 / DSM 12804 / CCUG 43448) protein is Peptide chain release factor 3.